Reading from the N-terminus, the 419-residue chain is UDP-N-acetylglucosamine 1-carboxyvinyltransferase (419 aa).

A phosphoenolpyruvate-binding site is contributed by 22-23 (KN). Residue Arg93 coordinates UDP-N-acetyl-alpha-D-glucosamine. The active-site Proton donor is the Cys117. Position 117 is a 2-(S-cysteinyl)pyruvic acid O-phosphothioketal (Cys117). UDP-N-acetyl-alpha-D-glucosamine contacts are provided by Asp306 and Ile328.

Belongs to the EPSP synthase family. MurA subfamily.

It is found in the cytoplasm. The catalysed reaction is phosphoenolpyruvate + UDP-N-acetyl-alpha-D-glucosamine = UDP-N-acetyl-3-O-(1-carboxyvinyl)-alpha-D-glucosamine + phosphate. The protein operates within cell wall biogenesis; peptidoglycan biosynthesis. Its function is as follows. Cell wall formation. Adds enolpyruvyl to UDP-N-acetylglucosamine. The protein is UDP-N-acetylglucosamine 1-carboxyvinyltransferase of Magnetococcus marinus (strain ATCC BAA-1437 / JCM 17883 / MC-1).